The following is a 216-amino-acid chain: Urease accessory protein UreG (216 aa).

GTP is bound at residue 25-32 (GPVGSGKT).

It belongs to the SIMIBI class G3E GTPase family. UreG subfamily. As to quaternary structure, homodimer. UreD, UreF and UreG form a complex that acts as a GTP-hydrolysis-dependent molecular chaperone, activating the urease apoprotein by helping to assemble the nickel containing metallocenter of UreC. The UreE protein probably delivers the nickel.

Its subcellular location is the cytoplasm. Functionally, facilitates the functional incorporation of the urease nickel metallocenter. This process requires GTP hydrolysis, probably effectuated by UreG. The sequence is that of Urease accessory protein UreG from Burkholderia thailandensis (strain ATCC 700388 / DSM 13276 / CCUG 48851 / CIP 106301 / E264).